Consider the following 65-residue polypeptide: Conotoxin mr5.1b (65 aa).

Positions 1–19 (MRCVPVFVILLLLIASAPS) are cleaved as a signal peptide. A propeptide spanning residues 20–48 (VDARLKTKDDMPLPSSHANIKRTLQMLRN) is cleaved from the precursor. Glu60 is subject to 4-carboxyglutamate.

This sequence belongs to the conotoxin T superfamily. Contains 2 disulfide bonds that can be either 'C1-C3, C2-C4' or 'C1-C4, C2-C3', since these disulfide connectivities have been observed for conotoxins with cysteine framework V (for examples, see AC P0DQQ7 and AC P81755). Expressed by the venom duct.

The protein resides in the secreted. This is Conotoxin mr5.1b from Conus marmoreus (Marble cone).